A 267-amino-acid chain; its full sequence is U6 snRNA phosphodiesterase 1 (267 aa).

The disordered stretch occupies residues 1-72 (MNAAPLVGYS…EDDSARHGGR (72 aa)). The Proton acceptor role is filled by H122. 122–124 (HLS) contacts AMP. Residues Q166, Y204, and 208–212 (SFHVS) each bind UMP. AMP is bound by residues Y204 and 206 to 212 (DPSFHVS). The active-site Proton donor is H210.

Belongs to the 2H phosphoesterase superfamily. USB1 family. In terms of assembly, interacts with PLRG1, CDC5L and PRPF19.

It is found in the nucleus. It catalyses the reaction a 3'-end uridylyl-uridine-RNA = a 3'-end 2',3'-cyclophospho-uridine-RNA + uridine. The catalysed reaction is a 3'-end uridylyl-adenosine-RNA = a 3'-end 2',3'-cyclophospho-uridine-RNA + adenosine. Functionally, 3'-5' RNA exonuclease that trims the 3' end of oligo(U) and oligo(A) tracts of the pre-U6 small nuclear RNA (snRNA) molecule, leading to the formation of a mature U6 snRNA 3' end-terminated with a 2',3'-cyclic phosphate. Participates in the U6 snRNA 3' end processing that prevents U6 snRNA degradation. In addition also removes uridines from the 3' end of U6atac snRNA and possibly the vault RNA VTRNA1-1. The chain is U6 snRNA phosphodiesterase 1 from Rattus norvegicus (Rat).